Here is a 450-residue protein sequence, read N- to C-terminus: MYTKDTIVAIATPQGNGGIGIIRISGIDALAIAEKLTKKQLKPRYATFCNVYNDNEIIDHGIVIFFKAPLSYTGEDVVEIQAHGNPFILNLIIKAALNCGARMAKAGEFTERAFLNNKLDLAQAEAVADIINASSEIAAKSAAKSLQGDFSKEINNLLEKLIYLRMYVEASIDFPEEEINFLEDQKIHSSLEEIYKVILAVKNSCKQGVILAEGITLILVGKPNAGKSSLLNALAGKESAIVTSIAGTTRDIVKEHIQINGVPMHIIDTAGLRNSDDIIESEGIKRAIKKIQEADQVLFVTDDYTNSQVKFSDIKEIIPEFYDQIPKDIDITYVHNKIDLLKEVPHNHANHIYISAENNIGIDKLKEHILNKVGYTNQNESIYTARERHVTAINNAFEHIKLAREQLELGNGELLAEELLIVQEYLNSITGEFSSDDLLGEIFSSFCIGK.

Arg23, Glu79, and Lys118 together coordinate (6S)-5-formyl-5,6,7,8-tetrahydrofolate. The region spanning 214–374 (GITLILVGKP…LKEHILNKVG (161 aa)) is the TrmE-type G domain. Asn224 serves as a coordination point for K(+). GTP-binding positions include 224 to 229 (NAGKSS), 243 to 249 (TSIAGTT), and 268 to 271 (DTAG). Residue Ser228 coordinates Mg(2+). The K(+) site is built by Thr243, Ile245, and Thr248. Thr249 is a Mg(2+) binding site. Lys450 contributes to the (6S)-5-formyl-5,6,7,8-tetrahydrofolate binding site.

Belongs to the TRAFAC class TrmE-Era-EngA-EngB-Septin-like GTPase superfamily. TrmE GTPase family. In terms of assembly, homodimer. Heterotetramer of two MnmE and two MnmG subunits. The cofactor is K(+).

The protein localises to the cytoplasm. Its function is as follows. Exhibits a very high intrinsic GTPase hydrolysis rate. Involved in the addition of a carboxymethylaminomethyl (cmnm) group at the wobble position (U34) of certain tRNAs, forming tRNA-cmnm(5)s(2)U34. The chain is tRNA modification GTPase MnmE from Francisella tularensis subsp. tularensis (strain WY96-3418).